The chain runs to 485 residues: Putative E3 ubiquitin-protein ligase makorin-4 (485 aa).

Residues 1–32 show a composition bias toward low complexity; the sequence is MAEAAAPGTTVTTSGAGAAAAEAAETAEAVSP. Residues 1–63 form a disordered region; that stretch reads MAEAAAPGTT…GSDGSGGRGD (63 aa). Gly residues predominate over residues 45–63; the sequence is AGGGVGGSDGSDGSGGRGD. C3H1-type zinc fingers lie at residues 90-117, 124-146, and 243-270; these read WTKQ…HDLS, VCKY…HSKP, and ETKK…HGDL. The interval 271–298 is makorin-type Cys-His; sequence CDMCGLQVLHPMDAAQRSQHIQACIEAH. The RING-type zinc finger occupies 316 to 370; that stretch reads CGICMEVVYEKANPNEHRFGILSNCNHTFCLKCIRKWRSAKEFESRIVKSCPQCR. The segment at 399–428 adopts a C3H1-type 4 zinc-finger fold; sequence AMSNKACKYFDEGRGSCPFGENCFYKHMYP.

The enzyme catalyses S-ubiquitinyl-[E2 ubiquitin-conjugating enzyme]-L-cysteine + [acceptor protein]-L-lysine = [E2 ubiquitin-conjugating enzyme]-L-cysteine + N(6)-ubiquitinyl-[acceptor protein]-L-lysine.. It participates in protein modification; protein ubiquitination. Its function is as follows. May act as a E3 ubiquitin ligase catalyzing the covalent attachment of ubiquitin moieties onto substrate proteins. The chain is Putative E3 ubiquitin-protein ligase makorin-4 (MKRN4P) from Homo sapiens (Human).